A 252-amino-acid polypeptide reads, in one-letter code: F-box/SPRY domain-containing protein 1 (252 aa).

One can recognise an F-box domain in the interval 1–48 (MVDPLCNYNVLEAIFSYLELNDLYRCSQVCKSWYHFLNDENSDVWRWH). The region spanning 58 to 250 (VKSDLLASVS…VSMVYLGTPL (193 aa)) is the B30.2/SPRY domain.

Belongs to the FBXO45/Fsn family. As to quaternary structure, component of an E3 ubiquitin ligase complex composed of hiw and Fsn.

It is found in the synapse. It functions in the pathway protein modification; protein ubiquitination. Functionally, required in the presynaptic motoneuron to down-regulate the levels of wnd and restrain synaptic terminal growth at the neuromuscular junction (NMJ). The chain is F-box/SPRY domain-containing protein 1 from Drosophila virilis (Fruit fly).